Reading from the N-terminus, the 147-residue chain is UPF0306 protein YE0465 (147 aa).

Belongs to the UPF0306 family.

The polypeptide is UPF0306 protein YE0465 (Yersinia enterocolitica serotype O:8 / biotype 1B (strain NCTC 13174 / 8081)).